The following is a 537-amino-acid chain: Cytochrome P450 27C1 (537 aa).

Cys483 serves as a coordination point for heme.

It belongs to the cytochrome P450 family. Heme is required as a cofactor. In terms of tissue distribution, expressed in the dorsal third of retinal pigment epithelium, but not in the ventral counterpart (at protein level).

Its subcellular location is the membrane. The catalysed reaction is all-trans-retinol + 2 reduced [adrenodoxin] + O2 + 2 H(+) = all-trans-3,4-didehydroretinol + 2 oxidized [adrenodoxin] + 2 H2O. Functionally, efficiently catalyzes the conversion of all-trans retinol (also called vitamin A1, the precursor of 11-cis retinal) to 3,4-didehydroretinol (also called vitamin A2, the precursor of 11-cis 3,4-didehydroretinal), also acts on all-trans retinal and all-trans retinoic acid. The replacement of 11-cis retinal chromophore in photopigments with 11-cis 3,4-didehydroretinal enhances sensitivity to long-wavelength light. This may improve vision in fresh water which is often turbid. This Aquarana catesbeiana (American bullfrog) protein is Cytochrome P450 27C1 (cyp27c1).